A 218-amino-acid polypeptide reads, in one-letter code: Thiopurine S-methyltransferase (218 aa).

Trp11, Leu46, Glu67, and Arg122 together coordinate S-adenosyl-L-methionine.

Belongs to the class I-like SAM-binding methyltransferase superfamily. TPMT family.

Its subcellular location is the cytoplasm. It carries out the reaction S-adenosyl-L-methionine + a thiopurine = S-adenosyl-L-homocysteine + a thiopurine S-methylether.. The chain is Thiopurine S-methyltransferase from Vibrio cholerae serotype O1 (strain ATCC 39541 / Classical Ogawa 395 / O395).